We begin with the raw amino-acid sequence, 526 residues long: Dye-decolorizing peroxidase (526 aa).

The first 21 residues, 1–21 (MRKSISTFILLSVLSVGQLVA), serve as a signal peptide directing secretion. Positions 22–63 (ARPRSTNAPPRRRTPQPRRTTSLFINPPALPDLPTVQAVDKL) are excised as a propeptide. Asn-186 carries N-linked (GlcNAc...) asparagine glycosylation. Residue Asp-231 is the Proton acceptor of the active site. Asn-367 carries an N-linked (GlcNAc...) asparagine glycan. Heme is bound at residue His-376. 2 N-linked (GlcNAc...) asparagine glycosylation sites follow: Asn-473 and Asn-484.

It belongs to the DyP-type peroxidase family. Heme b is required as a cofactor.

The protein resides in the secreted. It carries out the reaction Reactive Blue 5 + 2 H2O2 = 2,2'-disulfonyl azobenzene + 3-[(4-amino-6-chloro-1,3,5-triazin-2-yl)amino]benzenesulfonate + phthalate + 2 H2O + 2 H(+). The catalysed reaction is 2 a phenolic donor + H2O2 = 2 a phenolic radical donor + 2 H2O. In terms of biological role, manganese-independent peroxidase that is able to convert a large number of compounds, but its physiological substrate is not known. In addition to classic peroxidase substrates (e.g. 2,6-dimethoxyphenol), oxidizes dyes such as Reactive Blue 5 and Reactive Black 5. The polypeptide is Dye-decolorizing peroxidase (Mycena epipterygia (Yellow-stemmed mycena)).